A 387-amino-acid polypeptide reads, in one-letter code: Phosphoglycerate kinase (387 aa).

Residues 21-23, Arg36, and 59-62 each bind substrate; these read DLN and HLGR. Residue Lys84 is modified to N6-acetyllysine. Substrate is bound by residues Arg113 and Arg146. ATP contacts are provided by residues Lys197, Glu314, and 340–343; that span reads GGDT.

It belongs to the phosphoglycerate kinase family. As to quaternary structure, monomer.

It is found in the cytoplasm. The enzyme catalyses (2R)-3-phosphoglycerate + ATP = (2R)-3-phospho-glyceroyl phosphate + ADP. The protein operates within carbohydrate degradation; glycolysis; pyruvate from D-glyceraldehyde 3-phosphate: step 2/5. This chain is Phosphoglycerate kinase, found in Escherichia coli O9:H4 (strain HS).